The sequence spans 433 residues: Actin-related protein 4 (433 aa).

The segment at 289–317 is disordered; sequence GSDEEMNEEPSKPIEQTENNEVSQQDSSV. Polar residues predominate over residues 302-317; that stretch reads IEQTENNEVSQQDSSV.

This sequence belongs to the actin family. ARP4 subfamily. Component of the NuA4 histone acetyltransferase complex, of the INO80 chromatin remodeling complex, and of the SWR1 chromatin remodeling complex.

The protein localises to the nucleus. In terms of biological role, chromatin interaction component of the NuA4 histone acetyltransferase complex which is involved in transcriptional activation of selected genes principally by acetylation of nucleosomal histone H4 and H2A. The NuA4 complex is also involved in DNA repair. Is required for NuA4 complex integrity. Component of the SWR1 complex which mediates the ATP-dependent exchange of histone H2A for the H2A variant HZT1 leading to transcriptional regulation of selected genes by chromatin remodeling. Component of the INO80 complex which remodels chromatin by shifting nucleosomes and is involved in DNA repair. This is Actin-related protein 4 (alp5) from Schizosaccharomyces pombe (strain 972 / ATCC 24843) (Fission yeast).